Here is a 267-residue protein sequence, read N- to C-terminus: Regulatory protein VirG (267 aa).

One can recognise a Response regulatory domain in the interval 29-143 (HVLLVDDDVA…EFLARIRVAL (115 aa)). At aspartate 78 the chain carries 4-aspartylphosphate. A DNA-binding region (ompR/PhoB-type) is located at residues 155–255 (RRSFCFTDWT…ARGAGYFFDA (101 aa)).

In terms of processing, phosphorylated by wide host range (WHR) VirA protein.

Its subcellular location is the cytoplasm. In terms of biological role, virG is required for the positive regulation of at least two vir loci encoded by the Ti plasmid of A.tumefaciens. This is Regulatory protein VirG (virG) from Rhizobium radiobacter (Agrobacterium tumefaciens).